Reading from the N-terminus, the 986-residue chain is P3N-PIPO polyprotein (986 aa).

The Peptidase S30 domain maps to 141–284 (KLTEGQMNHL…QSILNSMIQF (144 aa)). Catalysis depends on for P1 proteinase activity residues histidine 192, aspartate 201, and serine 235. The Involved in interaction with stylet and aphid transmission motif lies at 334–337 (KITC). Residues 592-594 (PTK) carry the Involved in virions binding and aphid transmission motif. The Peptidase C6 domain occupies 618–740 (LYIAKQGYCY…ESDIKHYRVG (123 aa)). Residues cysteine 626 and histidine 699 each act as for helper component proteinase activity in the active site.

Belongs to the potyviridae P3N-PIPO polyprotein family. In terms of assembly, interacts (via PIPO domain) with host PCaP1 protein; this interaction may help to anchor the movement complex to the plasma membrane from which the complex could move to the plasmodesmata. In terms of processing, potyviral RNA is expressed as two polyproteins which undergo post-translational proteolytic processing. Genome polyprotein is processed by NIa-pro, P1 and HC-pro proteinases resulting in the production of at least ten individual proteins. P3N-PIPO is cleaved by P1 and HC-pro proteinases resulting in the production of three individual proteins. The P1 proteinase and the HC-pro cleave only their respective C-termini autocatalytically.

It localises to the host cell junction. It is found in the host plasmodesma. It carries out the reaction Hydrolyzes a Gly-|-Gly bond at its own C-terminus, commonly in the sequence -Tyr-Xaa-Val-Gly-|-Gly, in the processing of the potyviral polyprotein.. In terms of biological role, required for aphid transmission and also has proteolytic activity. Only cleaves a Gly-Gly dipeptide at its own C-terminus. Interacts with virions and aphid stylets. Acts as a suppressor of RNA-mediated gene silencing, also known as post-transcriptional gene silencing (PTGS), a mechanism of plant viral defense that limits the accumulation of viral RNAs. May have RNA-binding activity. Allows efficient cell to cell propagation, by bypassing the host cell wall barrier. Transports viral genome to neighboring plant cells directly through plasmosdesmata, without any budding. The polypeptide is P3N-PIPO polyprotein (Potato virus Y (strain N) (PVY)).